The following is a 355-amino-acid chain: Beta-porphyranase C (355 aa).

Positions 1 to 18 (MIKTLKRIPLVFLIAIMA) are cleaved as a signal peptide. A lipid anchor (N-palmitoyl cysteine) is attached at Cys-19. Residue Cys-19 is the site of S-diacylglycerol cysteine attachment. Residues 22-72 (SGDNGKDKVEEQEQAQEQGEKKGQGEERDKEDGIDGLQPTFLADQDPKPDD) are disordered. Positions 39 to 54 (QGEKKGQGEERDKEDG) are enriched in basic and acidic residues. Residues 71–355 (DDKKWIKVEG…WVRVWQLEDL (285 aa)) enclose the GH16 domain. The substrate site is built by Trp-110, Glu-208, and Glu-213. The Nucleophile role is filled by Glu-208. The active-site Proton donor is the Glu-213.

It belongs to the glycosyl hydrolase 16 family.

It localises to the cell outer membrane. It catalyses the reaction Hydrolysis of beta-D-galactopyranose-(1-&gt;4)-alpha-L-galactopyranose-6-sulfate linkages in porphyran.. Cleaves the sulfated polysaccharide porphyran at the (1-&gt;4) linkages between beta-D-galactopyranose and alpha-L-galactopyranose-6-sulfate, forming mostly the disaccharide alpha-L-galactopyranose-6-sulfate-(1-&gt;3)-beta-D-galactose. This chain is Beta-porphyranase C (porC), found in Zobellia galactanivorans (strain DSM 12802 / CCUG 47099 / CIP 106680 / NCIMB 13871 / Dsij).